Here is a 357-residue protein sequence, read N- to C-terminus: Protein ORF58 (357 aa).

The next 11 helical transmembrane spans lie at 20–40 (LAAT…FTLF), 44–64 (ITAV…CMCL), 78–98 (WICA…GFTF), 101–121 (VPFI…YPLA), 132–152 (IVHR…YLLL), 157–177 (FVSG…LLAF), 219–239 (VVVF…IGLL), 242–262 (VLIG…SCVG), 270–290 (ALFV…ILGS), 300–320 (CLCC…IQLI), and 333–353 (MVLA…SVIN).

The protein belongs to the herpesviridae BMRF2 family.

The protein resides in the virion membrane. Its subcellular location is the host cell membrane. In terms of biological role, participates in rearrangement of cellular actin to increase intercellular contacts and thereby promotes virus cell-to-cell spreadin$g. The protein is Protein ORF58 (ORF58) of Homo sapiens (Human).